A 248-amino-acid polypeptide reads, in one-letter code: MIKERVKMEVIGLEIPLISGNEEYTLAELISKYPLEENDIIVIAETVVSKSEKNVILKDTIKPSNEAIELSKKLGKEPEVVQVILDESNETVRLGPNFIVTETKHGFVCANSGVDESNTSKGIKPLPKNPDKSANEIRKGIEEITGKKVGVIINDSMGRPFRKGSCGVAIGVSGVCGLWDRKGEKDLFGRELKTTEVGIADELAATASVVMGQSDEGIPLVIIRNAPVPFKEGTGKELIRKKEEDVFR.

GTP-binding positions include 15-18 (IPLI), 45-46 (ET), and Lys-50. Asp-115 contacts a divalent metal cation. Asn-118 is a binding site for GTP. Positions 155, 156, and 213 each coordinate a divalent metal cation. 211–218 (MGQSDEGI) is a GTP binding site.

Belongs to the CofE family. In terms of assembly, homodimer. It depends on Mg(2+) as a cofactor. The cofactor is Mn(2+). K(+) is required as a cofactor.

The catalysed reaction is oxidized coenzyme F420-0 + GTP + L-glutamate = oxidized coenzyme F420-1 + GDP + phosphate + H(+). It catalyses the reaction oxidized coenzyme F420-1 + GTP + L-glutamate = oxidized coenzyme F420-2 + GDP + phosphate + H(+). Its pathway is cofactor biosynthesis; coenzyme F420 biosynthesis. Functionally, catalyzes the GTP-dependent successive addition of two or more gamma-linked L-glutamates to the L-lactyl phosphodiester of 7,8-didemethyl-8-hydroxy-5-deazariboflavin (F420-0) to form coenzyme F420-0-glutamyl-glutamate (F420-2) or polyglutamated F420 derivatives. This chain is Coenzyme F420:L-glutamate ligase, found in Methanococcus maripaludis (strain C6 / ATCC BAA-1332).